The primary structure comprises 458 residues: Monomethylamine methyltransferase MtmB3 (458 aa).

Position 202 (O202) is a non-standard amino acid, pyrrolysine.

This sequence belongs to the monomethylamine methyltransferase family.

It carries out the reaction Co(I)-[methylamine-specific corrinoid protein] + methylamine + H(+) = methyl-Co(III)-[methylamine-specific corrinoid protein] + NH4(+). The protein operates within one-carbon metabolism; methanogenesis from methylamine. Catalyzes the transfer of the methyl group from monomethylamine to the corrinoid cofactor of MtmC. In Methanosarcina barkeri (strain Fusaro / DSM 804), this protein is Monomethylamine methyltransferase MtmB3 (mtmB3).